Here is a 292-residue protein sequence, read N- to C-terminus: Large ribosomal subunit protein uL18 (292 aa).

Belongs to the universal ribosomal protein uL18 family. As to quaternary structure, component of the large ribosomal subunit (LSU).

Its subcellular location is the cytoplasm. The protein localises to the nucleus. Functionally, component of the ribosome, a large ribonucleoprotein complex responsible for the synthesis of proteins in the cell. The small ribosomal subunit (SSU) binds messenger RNAs (mRNAs) and translates the encoded message by selecting cognate aminoacyl-transfer RNA (tRNA) molecules. The large subunit (LSU) contains the ribosomal catalytic site termed the peptidyl transferase center (PTC), which catalyzes the formation of peptide bonds, thereby polymerizing the amino acids delivered by tRNAs into a polypeptide chain. The nascent polypeptides leave the ribosome through a tunnel in the LSU and interact with protein factors that function in enzymatic processing, targeting, and the membrane insertion of nascent chains at the exit of the ribosomal tunnel. The polypeptide is Large ribosomal subunit protein uL18 (rpl5) (Dictyostelium discoideum (Social amoeba)).